A 391-amino-acid polypeptide reads, in one-letter code: Elongation factor Tu (391 aa).

One can recognise a tr-type G domain in the interval 10 to 201; the sequence is KPHVNIGTIG…AVDEYIPTPA (192 aa). The G1 stretch occupies residues 19–26; it reads GHVDHGKT. Position 19–26 (19–26) interacts with GTP; it reads GHVDHGKT. Residue Thr-26 coordinates Mg(2+). Positions 55-59 are G2; sequence GITIS. Residues 76-79 form a G3 region; sequence DCPG. Residues 76-80 and 131-134 each bind GTP; these read DCPGH and NKVD. Residues 131-134 are G4; that stretch reads NKVD. The G5 stretch occupies residues 169–171; it reads SAL.

The protein belongs to the TRAFAC class translation factor GTPase superfamily. Classic translation factor GTPase family. EF-Tu/EF-1A subfamily. Monomer.

The protein resides in the cytoplasm. It carries out the reaction GTP + H2O = GDP + phosphate + H(+). In terms of biological role, GTP hydrolase that promotes the GTP-dependent binding of aminoacyl-tRNA to the A-site of ribosomes during protein biosynthesis. The sequence is that of Elongation factor Tu from Ruegeria pomeroyi (strain ATCC 700808 / DSM 15171 / DSS-3) (Silicibacter pomeroyi).